The following is a 402-amino-acid chain: UPF0261 protein BPP1817 (402 aa).

The protein belongs to the UPF0261 family.

In Bordetella parapertussis (strain 12822 / ATCC BAA-587 / NCTC 13253), this protein is UPF0261 protein BPP1817.